The chain runs to 536 residues: MTIAWARRRYGVKLGLGYIATAGLLVGVGVTTNDVPSTIVAGIAGLLTLGSINAAETVASIKEIAAQTERVANGNLEQEVTSTRTDEFGSLADSIEQMRQSLRGRLNEMERTRADLEETQAEAETAREEAEQAKQEAQAAEREARELAATYQDTAKRYGETMEAAATGDLTQRVDVDTDHEAMETVGTAFNQMMDDLQATVRTVTTVADEIEAKTERMSETSADIEASAGDTVEAVSKIESQANDQRTELDSAADDVQQVSASAEEIAATIDDLASRSEDVATASDAARDSSKSALDEMSSIETEVDDAVGQVEQLRDQVAEITDIVDVITDIGEQTNMLALNASIEAARAGGNADGDGFSVVADEVKDLAEETQDRANEIAAVVEKVTAQTEDVTASIQQTRTRVESGSETVESTLRDIRTIADSIAEVSNSIDEIQRTTSEQAETVQSTATSVERVAGLSDDTTALASDAESAVIGQRESAEEIAASLEQFQNTAVEQLQSRVASFTVATEDSETAGGSVEQPVMRAGADGGGA.

Over 2 to 14 (TIAWARRRYGVKL) the chain is Cytoplasmic. The chain crosses the membrane as a helical span at residues 15-29 (GLGYIATAGLLVGVG). Over 30-39 (VTTNDVPSTI) the chain is Extracellular. The helical transmembrane segment at 40–55 (VAGIAGLLTLGSINAA) threads the bilayer. One can recognise an HAMP 1 domain in the interval 55-107 (AETVASIKEIAAQTERVANGNLEQEVTSTRTDEFGSLADSIEQMRQSLRGRLN). The Cytoplasmic segment spans residues 56–536 (ETVASIKEIA…MRAGADGGGA (481 aa)). The interval 116–145 (LEETQAEAETAREEAEQAKQEAQAAEREAR) is disordered. Over residues 124–145 (ETAREEAEQAKQEAQAAEREAR) the composition is skewed to basic and acidic residues. In terms of domain architecture, HAMP 2 spans 149–202 (ATYQDTAKRYGETMEAAATGDLTQRVDVDTDHEAMETVGTAFNQMMDDLQATVR). Residues 221 to 459 (TSADIEASAG…STATSVERVA (239 aa)) form the Methyl-accepting transducer domain. Glutamate 266 is modified (glutamate methyl ester (Glu)). The segment at 278-307 (SEDVATASDAARDSSKSALDEMSSIETEVD) is disordered. Residues 287-296 (AARDSSKSAL) are compositionally biased toward basic and acidic residues. Glutamate 473 carries the glutamate methyl ester (Glu) modification. Positions 512–536 (TEDSETAGGSVEQPVMRAGADGGGA) are disordered.

Belongs to the methyl-accepting chemotaxis (MCP) protein family. Methylated by CheR.

Its subcellular location is the cell membrane. In terms of biological role, transduces signals from the phototaxis receptor sensory rhodopsin I (SR-I) to the flagellar motor. Responds to light changes through the variation of the level of methylation. The protein is Sensory rhodopsin I transducer (htr1) of Halobacterium salinarum (strain ATCC 29341 / DSM 671 / R1).